A 522-amino-acid chain; its full sequence is MRLRVRLLKRTWPLEVPETEPTLGHLRSHLRQSLLCTWGYSSNTRFTITLNYKDPLTGDEETLASYGIVSGDLICLILQDDIPAPNIPSSTDSEHSSLQNNEQPSLATSSNQTSMQDEQPSDSFQGQAAQSGVWNDDSMLGPSQNFEAESIQDNAHMAEGTGFYPSEPMLCSESVEGQVPHSLETLYQSADCSDANDALIVLIHLLMLESGYIPQGTEAKALSMPEKWKLSGVYKLQYMHPLCEGSSATLTCVPLGNLIVVNATLKINNEIRSVKRLQLLPESFICKEKLGENVANIYKDLQKLSRLFKDQLVYPLLAFTRQALNLPDVFGLVVLPLELKLRIFRLLDVRSVLSLSAVCRDLFTASNDPLLWRFLYLRDFRDNTVRVQDTDWKELYRKRHIQRKESPKGRFVMLLPSSTHTIPFYPNPLHPRPFPSSRLPPGIIGGEYDQRPTLPYVGDPISSLIPGPGETPSQFPPLRPRFDPVGPLPGPNPILPGRGGPNDRFPFRPSRGRPTDGRLSFM.

The interval 1–88 (MRLRVRLLKR…QDDIPAPNIP (88 aa)) is ubiquitin-like. The segment at 85–144 (PNIPSSTDSEHSSLQNNEQPSLATSSNQTSMQDEQPSDSFQGQAAQSGVWNDDSMLGPSQ) is disordered. A compositionally biased stretch (polar residues) spans 87–133 (IPSSTDSEHSSLQNNEQPSLATSSNQTSMQDEQPSDSFQGQAAQSGV). The segment at 92-129 (DSEHSSLQNNEQPSLATSSNQTSMQDEQPSDSFQGQAA) is important for interaction with PINK1. The segment at 129–169 (AQSGVWNDDSMLGPSQNFEAESIQDNAHMAEGTGFYPSEPM) is important for interaction with CDK6. The important for dimerization and interaction with PSMF1 stretch occupies residues 180–324 (PHSLETLYQS…PLLAFTRQAL (145 aa)). The F-box domain occupies 329-375 (VFGLVVLPLELKLRIFRLLDVRSVLSLSAVCRDLFTASNDPLLWRFL). The segment at 381–522 (RDNTVRVQDT…RPTDGRLSFM (142 aa)) is important for interaction with CDK6. 2 positions are modified to omega-N-methylarginine: arginine 432 and arginine 451. Positions 481–484 (RFDP) match the RFDP motif motif. Residues 483-522 (DPVGPLPGPNPILPGRGGPNDRFPFRPSRGRPTDGRLSFM) are disordered. Arginine 518 bears the Asymmetric dimethylarginine mark.

As to quaternary structure, part of the SCF (SKP1-CUL1-F-box) E3 ubiquitin-protein ligase complex SCF(FBXO7) formed of CUL1, SKP1, RBX1 and FBXO7. Interacts via its C-terminal proline-rich region with DLGAP5. Interacts with BIRC2. Interacts with CDK6 and promotes its interaction with D-type cyclin. Interacts with PSMF1. In terms of assembly, interacts (via the N-terminal Ubl domain) with PRKN. Interact (via N-terminal region) with PINK1. Interact (via N-terminal region) with PINK1.

Its subcellular location is the cytoplasm. The protein localises to the nucleus. It localises to the mitochondrion. The protein resides in the cytosol. The protein operates within protein modification; protein ubiquitination. In terms of biological role, substrate recognition component of a SCF (SKP1-CUL1-F-box protein) E3 ubiquitin-protein ligase complex which mediates the ubiquitination and subsequent proteasomal degradation of target proteins and plays a role in several biological processes such as cell cycle, cell proliferation, or maintenance of chromosome stability. Recognizes and ubiquitinates BIRC2 and the cell cycle regulator DLGAP5. Plays a role downstream of PINK1 in the clearance of damaged mitochondria via selective autophagy (mitophagy) by targeting PRKN to dysfunctional depolarized mitochondria. Promotes MFN1 ubiquitination. Mediates the ubiquitination and proteasomal degradation of UXT isoform 2, thereby impairing the NF-kappa-B signaling pathway. Inhibits NF-kappa-B pathway also by promoting the ubiquitination of TRAF2. Affects the assembly state and activity of the proteasome in the cells including neurons by ubiquitinating the proteasomal subunit PSMA2 via 'Lys-63'-linked polyubiquitin chains. Promotes 'Lys-48'-linked polyubiquitination SIRT7, leading to the hydrogen peroxide-induced cell death. The chain is F-box only protein 7 (FBXO7) from Homo sapiens (Human).